We begin with the raw amino-acid sequence, 577 residues long: Secreted LysM effector Lys4 (577 aa).

Residues 1–19 (MRALTAAVLFVAGLTPVLA) form the signal peptide. Residues 38–85 (AWYTIVKGDGCDTVEKKFKITPEQFFKWNPDVSTDCVKNFWVGNSYCV) form the LysM 1 domain. Low complexity predominate over residues 96 to 121 (TSTTVKSSSTTQKTSSTSSKLSSSSK). Positions 96 to 135 (TSTTVKSSSTTQKTSSTSSKLSSSSKPVNTTTTPYSTRNP) are disordered. The segment covering 122–135 (PVNTTTTPYSTRNP) has biased composition (polar residues). Asparagine 124, asparagine 140, asparagine 216, and asparagine 235 each carry an N-linked (GlcNAc...) asparagine glycan. 3 LysM domains span residues 251–298 (NFYQ…YYCV), 328–375 (KWYQ…WYCV), and 408–455 (QYWL…YVCV). Over residues 464–485 (SGSTTTITGPPTKGSNPPTTTT) the composition is skewed to low complexity. The interval 464–490 (SGSTTTITGPPTKGSNPPTTTTSGGGG) is disordered. Positions 510-558 (FWFRGKDGASLFCADIAKDAGVSLPDFLKWNPGVGSNCESLWADTWYCV) constitute a LysM 5 domain.

This sequence belongs to the secreted LysM effector family.

Might have a role in sequestration of chitin oligosaccharides (breakdown products of fungal cell walls that are released during invasion and act as triggers of host immunity) to dampen host defense. The protein is Secreted LysM effector Lys4 of Pochonia chlamydosporia (strain 123) (Metacordyceps chlamydosporia).